A 63-amino-acid polypeptide reads, in one-letter code: MRCLALLVVTLLLFTATATTGASNGMNAAASGEAPDSISLAVRDDCCPDPACRQNHPEICPSR.

The N-terminal stretch at 1–21 (MRCLALLVVTLLLFTATATTG) is a signal peptide. Residues 22 to 43 (ASNGMNAAASGEAPDSISLAVR) constitute a propeptide that is removed on maturation. 2 disulfide bridges follow: Cys-46–Cys-52 and Cys-47–Cys-60. Residues 48–50 (PDP) are lacks the Ser-Xaa-Pro motif that is crucial for potent interaction with nAChR.

Belongs to the conotoxin A superfamily. In terms of tissue distribution, expressed by the salivary gland.

It localises to the secreted. Alpha-conopeptides-like may act on postsynaptic membranes, they bind to the nicotinic acetylcholine receptors (nAChR) and thus inhibit them. Has possibly a distinct nAChR binding mode from other alpha-conotoxins, due to a different three residue motif (lacks the Ser-Xaa-Pro motif). This is Alpha-conotoxin-like PuSG1.2 from Conus pulicarius (Flea-bitten cone).